We begin with the raw amino-acid sequence, 232 residues long: Large ribosomal subunit protein uL1 (232 aa).

Belongs to the universal ribosomal protein uL1 family. In terms of assembly, part of the 50S ribosomal subunit.

Functionally, binds directly to 23S rRNA. The L1 stalk is quite mobile in the ribosome, and is involved in E site tRNA release. Protein L1 is also a translational repressor protein, it controls the translation of the L11 operon by binding to its mRNA. This chain is Large ribosomal subunit protein uL1, found in Chlamydia trachomatis serovar L2b (strain UCH-1/proctitis).